A 92-amino-acid polypeptide reads, in one-letter code: Small ribosomal subunit protein uS19c (92 aa).

Belongs to the universal ribosomal protein uS19 family.

It is found in the plastid. It localises to the chloroplast. Protein S19 forms a complex with S13 that binds strongly to the 16S ribosomal RNA. This Nasturtium officinale (Watercress) protein is Small ribosomal subunit protein uS19c.